A 373-amino-acid polypeptide reads, in one-letter code: Erythronate-4-phosphate dehydrogenase (373 aa).

2 residues coordinate substrate: Ser45 and Thr67. NAD(+)-binding positions include Asp147, 207-209 (ASR), and Asp233. The active site involves Arg209. Residue Glu238 is part of the active site. His255 functions as the Proton donor in the catalytic mechanism. Gly258 serves as a coordination point for NAD(+).

It belongs to the D-isomer specific 2-hydroxyacid dehydrogenase family. PdxB subfamily. Homodimer.

It localises to the cytoplasm. The catalysed reaction is 4-phospho-D-erythronate + NAD(+) = (R)-3-hydroxy-2-oxo-4-phosphooxybutanoate + NADH + H(+). Its pathway is cofactor biosynthesis; pyridoxine 5'-phosphate biosynthesis; pyridoxine 5'-phosphate from D-erythrose 4-phosphate: step 2/5. In terms of biological role, catalyzes the oxidation of erythronate-4-phosphate to 3-hydroxy-2-oxo-4-phosphonooxybutanoate. This is Erythronate-4-phosphate dehydrogenase from Pseudoalteromonas translucida (strain TAC 125).